The primary structure comprises 639 residues: Probable potassium transport system protein Kup 1 (639 aa).

Residues 1 to 16 (MALANTGSEAEPVEQS) show a composition bias toward polar residues. The tract at residues 1–21 (MALANTGSEAEPVEQSSHPEI) is disordered. 12 helical membrane passes run 29–49 (LMLG…IYAF), 67–87 (ILGV…IKYI), 117–137 (AVIL…AVIT), 154–174 (PTFQ…VFAV), 182–202 (VGLV…LSGL), 220–240 (IVAF…AIFL), 260–280 (IVLA…AGQG), 302–322 (ALIP…QAVI), 354–374 (IYMP…VVGF), 383–403 (AYGI…YVVM), 411–431 (LWVA…FFAS), and 436–456 (VFEG…GMWT).

It belongs to the HAK/KUP transporter (TC 2.A.72) family.

It localises to the cell inner membrane. It catalyses the reaction K(+)(in) + H(+)(in) = K(+)(out) + H(+)(out). Transport of potassium into the cell. Likely operates as a K(+):H(+) symporter. This chain is Probable potassium transport system protein Kup 1, found in Mesorhizobium japonicum (strain LMG 29417 / CECT 9101 / MAFF 303099) (Mesorhizobium loti (strain MAFF 303099)).